A 216-amino-acid polypeptide reads, in one-letter code: Protein-L-isoaspartate O-methyltransferase (216 aa).

The active site involves Ser66.

This sequence belongs to the methyltransferase superfamily. L-isoaspartyl/D-aspartyl protein methyltransferase family.

The protein resides in the cytoplasm. It catalyses the reaction [protein]-L-isoaspartate + S-adenosyl-L-methionine = [protein]-L-isoaspartate alpha-methyl ester + S-adenosyl-L-homocysteine. In terms of biological role, catalyzes the methyl esterification of L-isoaspartyl residues in peptides and proteins that result from spontaneous decomposition of normal L-aspartyl and L-asparaginyl residues. It plays a role in the repair and/or degradation of damaged proteins. The sequence is that of Protein-L-isoaspartate O-methyltransferase from Colwellia psychrerythraea (strain 34H / ATCC BAA-681) (Vibrio psychroerythus).